We begin with the raw amino-acid sequence, 312 residues long: Ribosomal protein L11 methyltransferase (312 aa).

Threonine 160, glycine 181, aspartate 203, and asparagine 246 together coordinate S-adenosyl-L-methionine.

It belongs to the methyltransferase superfamily. PrmA family.

It is found in the cytoplasm. It carries out the reaction L-lysyl-[protein] + 3 S-adenosyl-L-methionine = N(6),N(6),N(6)-trimethyl-L-lysyl-[protein] + 3 S-adenosyl-L-homocysteine + 3 H(+). Functionally, methylates ribosomal protein L11. This is Ribosomal protein L11 methyltransferase from Staphylococcus aureus (strain COL).